Reading from the N-terminus, the 298-residue chain is UDP-3-O-acyl-N-acetylglucosamine deacetylase (298 aa).

The Zn(2+) site is built by histidine 80, histidine 239, and aspartate 243. Histidine 266 functions as the Proton donor in the catalytic mechanism.

This sequence belongs to the LpxC family. The cofactor is Zn(2+).

It carries out the reaction a UDP-3-O-[(3R)-3-hydroxyacyl]-N-acetyl-alpha-D-glucosamine + H2O = a UDP-3-O-[(3R)-3-hydroxyacyl]-alpha-D-glucosamine + acetate. It participates in glycolipid biosynthesis; lipid IV(A) biosynthesis; lipid IV(A) from (3R)-3-hydroxytetradecanoyl-[acyl-carrier-protein] and UDP-N-acetyl-alpha-D-glucosamine: step 2/6. Functionally, catalyzes the hydrolysis of UDP-3-O-myristoyl-N-acetylglucosamine to form UDP-3-O-myristoylglucosamine and acetate, the committed step in lipid A biosynthesis. The sequence is that of UDP-3-O-acyl-N-acetylglucosamine deacetylase from Blochmanniella floridana.